We begin with the raw amino-acid sequence, 85 residues long: Large ribosomal subunit protein bL27 (85 aa).

A disordered region spans residues 1–20; that stretch reads MATKKAGGSTRNGRDSEAKR.

It belongs to the bacterial ribosomal protein bL27 family.

The polypeptide is Large ribosomal subunit protein bL27 (Actinobacillus pleuropneumoniae serotype 5b (strain L20)).